The following is a 524-amino-acid chain: Rho guanine nucleotide exchange factor 3 (524 aa).

Ser46 and Ser69 each carry phosphoserine. A DH domain is found at 121–303 (KRQEAIFELS…QGIVAEINTK (183 aa)). One can recognise a PH domain in the interval 290-448 (INIIQGIVAE…WLNCIRQAKE (159 aa)). A disordered region spans residues 461–524 (DSEGLVQGPG…CANSRPEESV (64 aa)). Residues 472–484 (ENREPQGETKLEQ) show a composition bias toward basic and acidic residues.

Interacts with RHOA and RHOB.

The protein localises to the cytoplasm. Its function is as follows. Acts as a guanine nucleotide exchange factor (GEF) for RhoA and RhoB GTPases. In Mus musculus (Mouse), this protein is Rho guanine nucleotide exchange factor 3 (Arhgef3).